The chain runs to 518 residues: Bifunctional purine biosynthesis protein PurH (518 aa).

Positions M1–T146 constitute an MGS-like domain.

Belongs to the PurH family.

It carries out the reaction (6R)-10-formyltetrahydrofolate + 5-amino-1-(5-phospho-beta-D-ribosyl)imidazole-4-carboxamide = 5-formamido-1-(5-phospho-D-ribosyl)imidazole-4-carboxamide + (6S)-5,6,7,8-tetrahydrofolate. The enzyme catalyses IMP + H2O = 5-formamido-1-(5-phospho-D-ribosyl)imidazole-4-carboxamide. The protein operates within purine metabolism; IMP biosynthesis via de novo pathway; 5-formamido-1-(5-phospho-D-ribosyl)imidazole-4-carboxamide from 5-amino-1-(5-phospho-D-ribosyl)imidazole-4-carboxamide (10-formyl THF route): step 1/1. It participates in purine metabolism; IMP biosynthesis via de novo pathway; IMP from 5-formamido-1-(5-phospho-D-ribosyl)imidazole-4-carboxamide: step 1/1. In Prochlorococcus marinus (strain MIT 9211), this protein is Bifunctional purine biosynthesis protein PurH.